Here is a 383-residue protein sequence, read N- to C-terminus: 3-dehydroquinate synthase (383 aa).

NAD(+) contacts are provided by residues 81–86 (EGEVSK), 115–119 (GVVGD), 139–140 (TS), Lys152, and Lys161. Residues Glu194, His256, and His274 each contribute to the Zn(2+) site.

The protein belongs to the sugar phosphate cyclases superfamily. Dehydroquinate synthase family. The cofactor is Co(2+). Zn(2+) is required as a cofactor. It depends on NAD(+) as a cofactor.

It localises to the cytoplasm. The catalysed reaction is 7-phospho-2-dehydro-3-deoxy-D-arabino-heptonate = 3-dehydroquinate + phosphate. The protein operates within metabolic intermediate biosynthesis; chorismate biosynthesis; chorismate from D-erythrose 4-phosphate and phosphoenolpyruvate: step 2/7. Functionally, catalyzes the conversion of 3-deoxy-D-arabino-heptulosonate 7-phosphate (DAHP) to dehydroquinate (DHQ). In Nitrobacter hamburgensis (strain DSM 10229 / NCIMB 13809 / X14), this protein is 3-dehydroquinate synthase.